A 181-amino-acid polypeptide reads, in one-letter code: Dual-action ribosomal maturation protein DarP (181 aa).

The segment at 1-23 (MTGIKKPMSQYQDDNELEDWGPS) is disordered.

Belongs to the DarP family.

It localises to the cytoplasm. In terms of biological role, member of a network of 50S ribosomal subunit biogenesis factors which assembles along the 30S-50S interface, preventing incorrect 23S rRNA structures from forming. Promotes peptidyl transferase center (PTC) maturation. The chain is Dual-action ribosomal maturation protein DarP from Aeromonas salmonicida (strain A449).